Here is a 379-residue protein sequence, read N- to C-terminus: Thiosulfate/3-mercaptopyruvate sulfurtransferase 1, mitochondrial (379 aa).

Residues 1–56 (MASTLFSRTFLAASHRLITPSLPQKIFNPATFLSRSLHSQLGSASTAYKSTTWARR) constitute a mitochondrion transit peptide. Residue A57 is modified to N-acetylalanine. 2 Rhodanese domains span residues 91 to 208 (REPD…DVES) and 259 to 373 (EDPT…LPIE). The active-site Cysteine persulfide intermediate is C333.

Expressed in roots, rosette and cauline leaves, stems, flowers and siliques.

It is found in the mitochondrion. The enzyme catalyses thiosulfate + hydrogen cyanide = thiocyanate + sulfite + 2 H(+). It carries out the reaction 2-oxo-3-sulfanylpropanoate + [thioredoxin]-dithiol = [thioredoxin]-disulfide + hydrogen sulfide + pyruvate + H(+). Catalyzes the transfer of a sulfur ion from a donor to cyanide or to other thiol compounds. Substrate preference is 3-mercaptopyruvate &gt; thiosulfate. Involved in embryo and seed development. The polypeptide is Thiosulfate/3-mercaptopyruvate sulfurtransferase 1, mitochondrial (STR1) (Arabidopsis thaliana (Mouse-ear cress)).